Reading from the N-terminus, the 249-residue chain is Uridylate kinase (249 aa).

Lys-16–Gly-19 lines the ATP pocket. A UMP-binding site is contributed by Gly-57. Residues Gly-58 and Arg-62 each contribute to the ATP site. UMP is bound by residues Asp-77 and Ala-138 to Thr-145. Positions 166, 172, and 175 each coordinate ATP.

It belongs to the UMP kinase family. As to quaternary structure, homohexamer.

The protein localises to the cytoplasm. The catalysed reaction is UMP + ATP = UDP + ADP. It participates in pyrimidine metabolism; CTP biosynthesis via de novo pathway; UDP from UMP (UMPK route): step 1/1. With respect to regulation, inhibited by UTP. Catalyzes the reversible phosphorylation of UMP to UDP. The polypeptide is Uridylate kinase (Bifidobacterium adolescentis (strain ATCC 15703 / DSM 20083 / NCTC 11814 / E194a)).